We begin with the raw amino-acid sequence, 455 residues long: Ribulose bisphosphate carboxylase large chain (455 aa).

At Lys5 the chain carries N6,N6,N6-trimethyllysine. Substrate contacts are provided by Asn114 and Thr164. Lys166 functions as the Proton acceptor in the catalytic mechanism. A substrate-binding site is contributed by Lys168. Residues Lys192, Asp194, and Glu195 each coordinate Mg(2+). Lys192 carries the post-translational modification N6-carboxylysine. His285 (proton acceptor) is an active-site residue. Substrate contacts are provided by Arg286, His318, and Ser370.

It belongs to the RuBisCO large chain family. Type I subfamily. Heterohexadecamer of 8 large chains and 8 small chains; disulfide-linked. The disulfide link is formed within the large subunit homodimers. Mg(2+) is required as a cofactor. The disulfide bond which can form in the large chain dimeric partners within the hexadecamer appears to be associated with oxidative stress and protein turnover.

It is found in the plastid. The protein localises to the chloroplast. The catalysed reaction is 2 (2R)-3-phosphoglycerate + 2 H(+) = D-ribulose 1,5-bisphosphate + CO2 + H2O. It catalyses the reaction D-ribulose 1,5-bisphosphate + O2 = 2-phosphoglycolate + (2R)-3-phosphoglycerate + 2 H(+). RuBisCO catalyzes two reactions: the carboxylation of D-ribulose 1,5-bisphosphate, the primary event in carbon dioxide fixation, as well as the oxidative fragmentation of the pentose substrate in the photorespiration process. Both reactions occur simultaneously and in competition at the same active site. The polypeptide is Ribulose bisphosphate carboxylase large chain (Lupinus latifolius (Broad-leaved lupine)).